Consider the following 349-residue polypeptide: tRNA pseudouridine synthase D (349 aa).

F27 provides a ligand contact to substrate. D80 (nucleophile) is an active-site residue. N129 is a substrate binding site. The 149-residue stretch at 155–303 (GVPNYFGAQR…VEAARRAMLL (149 aa)) folds into the TRUD domain. F329 provides a ligand contact to substrate.

It belongs to the pseudouridine synthase TruD family.

The enzyme catalyses uridine(13) in tRNA = pseudouridine(13) in tRNA. In terms of biological role, responsible for synthesis of pseudouridine from uracil-13 in transfer RNAs. This is tRNA pseudouridine synthase D from Shigella boydii serotype 4 (strain Sb227).